The following is a 79-amino-acid chain: MKVAIIFLLSALALLNLAGNTTAKVIGKKANCPNTLVGCPRDYDPVCGTDGKTYANECILCFENRKFGTSIRIQRRGLC.

The signal sequence occupies residues 1–23 (MKVAIIFLLSALALLNLAGNTTA). The Kazal-like domain maps to 26-79 (IGKKANCPNTLVGCPRDYDPVCGTDGKTYANECILCFENRKFGTSIRIQRRGLC). Disulfide bonds link cysteine 32-cysteine 61, cysteine 39-cysteine 58, and cysteine 47-cysteine 79.

As to expression, seminal vesicle.

It localises to the secreted. Its function is as follows. Serine protease inhibitor which exhibits anti-trypsin activity. In the pancreas, protects against trypsin-catalyzed premature activation of zymogens. In terms of biological role, in the male reproductive tract, binds to sperm heads where it modulates sperm capacitance by inhibiting calcium uptake and nitrogen oxide (NO) production. This Rattus norvegicus (Rat) protein is Serine protease inhibitor Kazal-type 1-like.